A 109-amino-acid chain; its full sequence is Hainantoxin-XVIII-5 (109 aa).

Residues 1-18 (MKLSIIIIATSLVIAVVA) form the signal peptide. The propeptide occupies 19–46 (FPSKDSKAIENDKTEQRMEIVVQETARA). 4 disulfide bridges follow: Cys-47–Cys-62, Cys-55–Cys-68, Cys-59–Cys-108, and Cys-61–Cys-81.

The protein belongs to the neurotoxin 25 family. F7 subfamily. In terms of tissue distribution, expressed by the venom gland.

It localises to the secreted. Functionally, putative ion channel inhibitor. This is Hainantoxin-XVIII-5 from Cyriopagopus hainanus (Chinese bird spider).